We begin with the raw amino-acid sequence, 407 residues long: Arginine biosynthesis bifunctional protein ArgJ (407 aa).

The substrate site is built by Thr154, Lys180, Thr191, Glu278, Asn402, and Ser407. The active-site Nucleophile is Thr191.

The protein belongs to the ArgJ family. Heterotetramer of two alpha and two beta chains.

It localises to the cytoplasm. It carries out the reaction N(2)-acetyl-L-ornithine + L-glutamate = N-acetyl-L-glutamate + L-ornithine. The enzyme catalyses L-glutamate + acetyl-CoA = N-acetyl-L-glutamate + CoA + H(+). It participates in amino-acid biosynthesis; L-arginine biosynthesis; L-ornithine and N-acetyl-L-glutamate from L-glutamate and N(2)-acetyl-L-ornithine (cyclic): step 1/1. It functions in the pathway amino-acid biosynthesis; L-arginine biosynthesis; N(2)-acetyl-L-ornithine from L-glutamate: step 1/4. Functionally, catalyzes two activities which are involved in the cyclic version of arginine biosynthesis: the synthesis of N-acetylglutamate from glutamate and acetyl-CoA as the acetyl donor, and of ornithine by transacetylation between N(2)-acetylornithine and glutamate. The polypeptide is Arginine biosynthesis bifunctional protein ArgJ (Psychrobacter arcticus (strain DSM 17307 / VKM B-2377 / 273-4)).